The sequence spans 444 residues: Glutamate--tRNA ligase 1 (444 aa).

The short motif at 10–20 (PSPTGRLHLGN) is the 'HIGH' region element. Positions 241-245 (GLSKR) match the 'KMSKS' region motif. Position 244 (K244) interacts with ATP.

The protein belongs to the class-I aminoacyl-tRNA synthetase family. Glutamate--tRNA ligase type 1 subfamily. Monomer.

Its subcellular location is the cytoplasm. The catalysed reaction is tRNA(Glu) + L-glutamate + ATP = L-glutamyl-tRNA(Glu) + AMP + diphosphate. In terms of biological role, catalyzes the attachment of glutamate to tRNA(Glu) in a two-step reaction: glutamate is first activated by ATP to form Glu-AMP and then transferred to the acceptor end of tRNA(Glu). This is Glutamate--tRNA ligase 1 from Rhodospirillum rubrum (strain ATCC 11170 / ATH 1.1.1 / DSM 467 / LMG 4362 / NCIMB 8255 / S1).